Here is a 503-residue protein sequence, read N- to C-terminus: Aromatase (503 aa).

Transmembrane regions (helical) follow at residues 19–39 and 51–71; these read EVMPVATLPILLLTGFLFFVW and GYCMGIGPLISHLRFLWMGLG. A substrate-binding pocket region spans residues 294-324; the sequence is ENVNQCILEMMIAAPDTLSVTVFFMLCLIAQ. Substrate is bound by residues aspartate 309 and methionine 374. Cysteine 437 provides a ligand contact to heme.

This sequence belongs to the cytochrome P450 family. The cofactor is heme. As to expression, expressed in placenta. Highly expressed in follicles (0 hour:hCG), followed by a drop (12-24 hour:hCG) and by an increase (30-39 hour:hCG). Highly expressed in corpora lutea. Also expressed in granulosa cell layer. Not expressed in theca interna.

The protein localises to the endoplasmic reticulum membrane. Its subcellular location is the microsome membrane. It carries out the reaction testosterone + 3 reduced [NADPH--hemoprotein reductase] + 3 O2 = 17beta-estradiol + formate + 3 oxidized [NADPH--hemoprotein reductase] + 4 H2O + 4 H(+). It catalyses the reaction androst-4-ene-3,17-dione + 3 reduced [NADPH--hemoprotein reductase] + 3 O2 = estrone + formate + 3 oxidized [NADPH--hemoprotein reductase] + 4 H2O + 4 H(+). The catalysed reaction is androst-4-ene-3,17-dione + reduced [NADPH--hemoprotein reductase] + O2 = 19-hydroxyandrost-4-ene-3,17-dione + oxidized [NADPH--hemoprotein reductase] + H2O + H(+). The enzyme catalyses 19-hydroxyandrost-4-ene-3,17-dione + reduced [NADPH--hemoprotein reductase] + O2 = 19-oxo-androst-4-ene-3,17-dione + oxidized [NADPH--hemoprotein reductase] + 2 H2O + H(+). It carries out the reaction 19-oxo-androst-4-ene-3,17-dione + reduced [NADPH--hemoprotein reductase] + O2 = estrone + formate + oxidized [NADPH--hemoprotein reductase] + H2O + 2 H(+). It catalyses the reaction estrone + reduced [NADPH--hemoprotein reductase] + O2 = 2-hydroxyestrone + oxidized [NADPH--hemoprotein reductase] + H2O + H(+). The catalysed reaction is 17beta-hydroxy-5alpha-androstan-3-one + reduced [NADPH--hemoprotein reductase] + O2 = 17beta,19-dihydroxy-3-oxo-5alpha-androstanone + oxidized [NADPH--hemoprotein reductase] + H2O + H(+). The enzyme catalyses 17beta,19-dihydroxy-3-oxo-5alpha-androstanone + reduced [NADPH--hemoprotein reductase] + O2 = 17beta-hydroxy-3,19-dioxo-5alpha-androstanone + oxidized [NADPH--hemoprotein reductase] + 2 H2O + H(+). It carries out the reaction 17beta-hydroxy-3,19-dioxo-5alpha-androstanone + reduced [NADPH--hemoprotein reductase] + O2 = 17beta-hydroxy-3-oxo-19-nor-5alpha-androst-1-ene + formate + oxidized [NADPH--hemoprotein reductase] + H2O + 2 H(+). It functions in the pathway steroid hormone biosynthesis. In terms of biological role, a cytochrome P450 monooxygenase that catalyzes the conversion of C19 androgens, androst-4-ene-3,17-dione (androstenedione) and testosterone to the C18 estrogens, estrone and estradiol, respectively. Catalyzes three successive oxidations of C19 androgens: two conventional oxidations at C19 yielding 19-hydroxy and 19-oxo/19-aldehyde derivatives, followed by a third oxidative aromatization step that involves C1-beta hydrogen abstraction combined with cleavage of the C10-C19 bond to yield a phenolic A ring and formic acid. Alternatively, the third oxidative reaction yields a 19-norsteroid and formic acid. Converts dihydrotestosterone to delta1,10-dehydro 19-nordihydrotestosterone and may play a role in homeostasis of this potent androgen. Also displays 2-hydroxylase activity toward estrone. Mechanistically, uses molecular oxygen inserting one oxygen atom into a substrate, and reducing the second into a water molecule, with two electrons provided by NADPH via cytochrome P450 reductase (CPR; NADPH-ferrihemoprotein reductase). In Equus caballus (Horse), this protein is Aromatase (CYP19A1).